A 208-amino-acid polypeptide reads, in one-letter code: Ypt/Rab-type GTPase ypt71 (208 aa).

GTP is bound by residues 17 to 23, 33 to 40, G66, 124 to 127, and 158 to 160; these read SGVGKTC, FSREYKAT, NQID, and SAK. Residues 37–45 carry the Effector region motif; the sequence is YKATIGADF. Residues C206 and C208 are each lipidated (S-geranylgeranyl cysteine). A Cysteine methyl ester modification is found at C208.

This sequence belongs to the small GTPase superfamily. Rab family.

It localises to the vacuole membrane. With respect to regulation, rab activation is generally mediated by a guanine exchange factor (GEF), while inactivation through hydrolysis of bound GTP is catalyzed by a GTPase activating protein (GAP). In terms of biological role, ypt/Rab-type GTPases are key regulators of membrane trafficking and intracellular vesicular transport. They act as molecular switches that convert between GTP-bound and GDP-bound states, and regulate virtually all steps of membrane traffic from the formation of the transport vesicle at the donor membrane to its fusion at the target membrane. In the GDP-bound state, Ypt proteins are predominantly cytosolic, solubilized through the interaction with a GDP dissociation inhibitor (GDI). In the GTP-bound state, the proteins are membrane bound and interact with specific effector proteins that select cargo, promote vesicle movement, or verify the correct site of fusion. Act antagonistically to ypt7 in regulating vacuolar morphology, promoting vacuolar fission. The polypeptide is Ypt/Rab-type GTPase ypt71 (ypt71) (Schizosaccharomyces pombe (strain 972 / ATCC 24843) (Fission yeast)).